We begin with the raw amino-acid sequence, 364 residues long: Fructose-bisphosphate aldolase C-A (364 aa).

Residues R56 and K147 each contribute to the substrate site. E188 serves as the catalytic Proton acceptor. Catalysis depends on K230, which acts as the Schiff-base intermediate with dihydroxyacetone-P.

It belongs to the class I fructose-bisphosphate aldolase family. As to quaternary structure, homotetramer. As to expression, expressed specifically in Purkinje cells in the brain.

The catalysed reaction is beta-D-fructose 1,6-bisphosphate = D-glyceraldehyde 3-phosphate + dihydroxyacetone phosphate. The protein operates within carbohydrate degradation; glycolysis; D-glyceraldehyde 3-phosphate and glycerone phosphate from D-glucose: step 4/4. The chain is Fructose-bisphosphate aldolase C-A from Danio rerio (Zebrafish).